Consider the following 238-residue polypeptide: Probable transcriptional regulatory protein VPA0011 (238 aa).

It belongs to the TACO1 family.

It localises to the cytoplasm. The protein is Probable transcriptional regulatory protein VPA0011 of Vibrio parahaemolyticus serotype O3:K6 (strain RIMD 2210633).